The following is a 125-amino-acid chain: GFDCPFGWSSYEGYCYKVYNKKMNWEDAESFCREQHKRSHLVSFHSSGEVDFVVSKTFPILRYDFVWMGLSDIWKECTKEWSDGARLDYKAWSGKSYCLVSKTTNNEWLSMDCSRTRYPVCKFXG.

Residues 1–125 (GFDCPFGWSS…TRYPVCKFXG (125 aa)) enclose the C-type lectin domain. Disulfide bonds link C4-C15, C32-C121, and C98-C113.

The protein belongs to the snaclec family. In terms of assembly, heterotetramer of the subunits alpha, alpha', beta and beta'; disulfide-linked. In terms of tissue distribution, expressed by the venom gland.

It localises to the secreted. In terms of biological role, potent platelet activator that aggregates platelets via both GPIbalpha (GP1BA) and GPVI (GP6). Induces a tyrosine phosphorylation profile in platelets that resembles this produced by collagen, involving the time dependent tyrosine phosphorylation of Fc receptor gamma chain (FCGR1A), phospholipase Cgamma2 (PLCG2), and LAT. The sequence is that of Snaclec alboaggregin-A subunit beta from Trimeresurus albolabris (White-lipped pit viper).